The following is a 239-amino-acid chain: MTQQIKYKRVLLKLSGESLMGSDPFGINHDTIVQTVGEIAEIVKMGVQVGIVVGGGNIFRGVSAQAGSMDRATADYMGMMATVMNALALKDAFETLGIKARVQSALSMQQIAETYARPKAIQYLEEGKVVIFAAGTGNPFFTTDTAAALRGAEMNCDVMLKATNVDGVYTADPKKDPSATRYETITFDEALNKNLKVMDATAFALCRERKLNIVVFGIAKQGSLKRVITGEDEGTLVHC.

13–16 (KLSG) lines the ATP pocket. UMP is bound at residue glycine 55. Residues glycine 56 and arginine 60 each contribute to the ATP site. UMP is bound by residues aspartate 75 and 136-143 (TGNPFFTT). Residues threonine 163, asparagine 164, tyrosine 169, and aspartate 172 each coordinate ATP.

This sequence belongs to the UMP kinase family. As to quaternary structure, homohexamer.

The protein resides in the cytoplasm. It carries out the reaction UMP + ATP = UDP + ADP. Its pathway is pyrimidine metabolism; CTP biosynthesis via de novo pathway; UDP from UMP (UMPK route): step 1/1. Its activity is regulated as follows. Inhibited by UTP. Its function is as follows. Catalyzes the reversible phosphorylation of UMP to UDP. The sequence is that of Uridylate kinase from Neisseria gonorrhoeae (strain ATCC 700825 / FA 1090).